The sequence spans 345 residues: SLAM family member 5 (345 aa).

The first 21 residues, 1–21 (MAQHHLWILLLCLQTWPEAAG), serve as a signal peptide directing secretion. The Extracellular portion of the chain corresponds to 22–225 (KDSEIFTVNG…AMGFRTHHTG (204 aa)). The 104-residue stretch at 26–129 (IFTVNGILGE…TTKRYNLQIY (104 aa)) folds into the Ig-like V-type domain. Positions 135–207 (PKITQSLMAS…PVSNNSDSIS (73 aa)) constitute an Ig-like C2-type domain. A glycan (N-linked (GlcNAc...) asparagine) is linked at asparagine 150. Cysteine 155 and cysteine 193 are joined by a disulfide. Residues 226–246 (LLSVLAMFFLLVLILSSVFLF) traverse the membrane as a helical segment. The Cytoplasmic portion of the chain corresponds to 247-345 (RLFKRRQGRI…PGTSSYEIVI (99 aa)). Positions 277 to 282 (TIYTYI) match the ITSM 1 motif. Residue tyrosine 279 is modified to Phosphotyrosine. Tyrosine 296 is modified (phosphotyrosine; by LYN). Positions 314-319 (TVYSEV) match the ITSM 2 motif. Tyrosine 316 carries the post-translational modification Phosphotyrosine. Residues 326–345 (GKASTQDSKPPGTSSYEIVI) are disordered. Residues 328–345 (ASTQDSKPPGTSSYEIVI) show a composition bias toward polar residues. Tyrosine 341 is subject to Phosphotyrosine; by FES.

As to quaternary structure, homodimer; via its extracellular domain. Forms a head to tail dimer with a CD48 molecule from another cell. Interacts with SH2 domain-containing proteins SH2D1A/SAP and SH2D1B/EAT-2. Interacts with tyrosine-protein phosphatases PTPN6/SHP-1 and PTPN11//SHP-2 via its phosphorylated cytoplasmic domain, and this interaction is blocked by SH2D1A. Interacts (via phosphorylated ITSM 1 and 2) with INPP5D/SHIP1. Post-translationally, phosphorylated by tyrosine-protein kinase LCK on tyrosine residues following ligation induced by agonist monoclonal antibody. The association with SH2D1A is dependent of tyrosine phosphorylation of its cytoplasmic domain. Phosphorylated on Tyr-296 and Tyr-316 following platelet aggregation. Phosphorylated on tyrosine residues upon high affinity immunoglobulin epsilon receptor aggregation in mast cells. In terms of processing, N-glycosylated. As to expression, predominantly expressed in hematopoietic tissues, such as lymph node, spleen and peripheral leukocytes. Expressed in macrophages, B-cells, monocytes, platelets, thymocytes, T-cells and dendritic cells. Highly expressed in memory T-cells. Expressed in mast cells.

It localises to the cell membrane. Self-ligand receptor of the signaling lymphocytic activation molecule (SLAM) family. SLAM receptors triggered by homo- or heterotypic cell-cell interactions are modulating the activation and differentiation of a wide variety of immune cells and thus are involved in the regulation and interconnection of both innate and adaptive immune response. Activities are controlled by presence or absence of small cytoplasmic adapter proteins, SH2D1A/SAP and/or SH2D1B/EAT-2. Can mediate natural killer (NK) cell cytotoxicity dependent on SH2D1A and SH2D1B. Increases proliferative responses of activated T-cells and SH2D1A/SAP does not seem be required for this process. Homophilic interactions enhance interferon gamma/IFNG secretion in lymphocytes and induce platelet stimulation via a SH2D1A-dependent pathway. May serve as a marker for hematopoietic progenitor cells Required for a prolonged T-cell:B-cell contact, optimal T follicular helper function, and germinal center formation. In germinal centers involved in maintaining B-cell tolerance and in preventing autoimmunity. In mast cells negatively regulates high affinity immunoglobulin epsilon receptor signaling; independent of SH2D1A and SH2D1B but implicating FES and PTPN6/SHP-1. In macrophages enhances LPS-induced MAPK phosphorylation and NF-kappaB activation and modulates LPS-induced cytokine secretion; involving ITSM 2. Positively regulates macroautophagy in primary dendritic cells via stabilization of IRF8; inhibits TRIM21-mediated proteasomal degradation of IRF8. The sequence is that of SLAM family member 5 (CD84) from Homo sapiens (Human).